Reading from the N-terminus, the 63-residue chain is Large ribosomal subunit protein uL30 (63 aa).

Belongs to the universal ribosomal protein uL30 family. Part of the 50S ribosomal subunit.

The protein is Large ribosomal subunit protein uL30 of Bradyrhizobium sp. (strain ORS 278).